Consider the following 159-residue polypeptide: Cyclic pyranopterin monophosphate synthase (159 aa).

Substrate-binding positions include Met-76 to His-78 and Met-114 to Glu-115. Residue Asp-129 is part of the active site.

The protein belongs to the MoaC family. In terms of assembly, homohexamer; trimer of dimers.

It catalyses the reaction (8S)-3',8-cyclo-7,8-dihydroguanosine 5'-triphosphate = cyclic pyranopterin phosphate + diphosphate. It participates in cofactor biosynthesis; molybdopterin biosynthesis. Its function is as follows. Catalyzes the conversion of (8S)-3',8-cyclo-7,8-dihydroguanosine 5'-triphosphate to cyclic pyranopterin monophosphate (cPMP). This is Cyclic pyranopterin monophosphate synthase from Natranaerobius thermophilus (strain ATCC BAA-1301 / DSM 18059 / JW/NM-WN-LF).